Consider the following 321-residue polypeptide: Arabinan endo-1,5-alpha-L-arabinosidase A (321 aa).

The first 19 residues, 1 to 19 (MYQLLSVASVPLLASLVHG), serve as a signal peptide directing secretion. Residue Asp-34 is the Proton acceptor of the active site. The active-site Proton donor is Glu-200. N-linked (GlcNAc...) asparagine glycosylation occurs at Asn-295.

It belongs to the glycosyl hydrolase 43 family.

It catalyses the reaction Endohydrolysis of (1-&gt;5)-alpha-arabinofuranosidic linkages in (1-&gt;5)-arabinans.. It participates in glycan metabolism; L-arabinan degradation. Its function is as follows. Its preferred substrate is linear 1,5-alpha-L-arabinan. The enzyme activity is progressively reduced as 1,5-alpha-chains become shorter or more highly substituted. The chain is Arabinan endo-1,5-alpha-L-arabinosidase A (abnA) from Aspergillus niger.